The chain runs to 250 residues: Triosephosphate isomerase (250 aa).

Residues N10 and K12 each contribute to the substrate site. H94 functions as the Electrophile in the catalytic mechanism. The Proton acceptor role is filled by E167.

The protein belongs to the triosephosphate isomerase family. As to quaternary structure, homodimer.

The protein localises to the cytoplasm. It carries out the reaction D-glyceraldehyde 3-phosphate = dihydroxyacetone phosphate. Its pathway is carbohydrate biosynthesis; gluconeogenesis. It functions in the pathway carbohydrate degradation; glycolysis; D-glyceraldehyde 3-phosphate from glycerone phosphate: step 1/1. The polypeptide is Triosephosphate isomerase (Taenia solium (Pork tapeworm)).